The primary structure comprises 33 residues: U1-pseudomyrmecitoxin-Pt1 subunit LS1 (33 aa).

It belongs to the myrmexin family. As to quaternary structure, heterodimer composed of subunit LS1 and subunit SS1 (U1-PSDTX-Pt1b), heterodimer composed of subunit LS1 and SS2 (U1-PSDTX-Pt1b), and heterodimer composed of subunit LS1 and SS3; disulfide-linked. Expressed by the venom gland.

The protein resides in the secreted. In terms of biological role, this heterodimer may have anti-inflammatory properties, since the myrmexin complex (composed of 6 SS-LS heterodimers) inhibits carrageenin-induced edema in a dose-dependent manner (after subcutaneous injection into rats). This is U1-pseudomyrmecitoxin-Pt1 subunit LS1 from Pseudomyrmex triplarinus (Ant).